The chain runs to 138 residues: MACRCTQLQDTIDEVATQFYSSIHYLSSHHDFVPLPGQEKVSDSKVNPISAEELQFAQRDLAKDLVTKFMQIDTLINQLPGISTAPKHQLEKIKKLQNSIEEKQLERKSLESENEDLKLQLAKRIETFGRLSCVLFQP.

Positions 87-128 (KHQLEKIKKLQNSIEEKQLERKSLESENEDLKLQLAKRIETF) form a coiled coil.

This sequence belongs to the Mediator complex subunit 21 family. Component of the Mediator complex.

Its subcellular location is the nucleus. In terms of biological role, component of the Mediator complex, a coactivator involved in the regulated transcription of nearly all RNA polymerase II-dependent genes. Mediator functions as a bridge to convey information from gene-specific regulatory proteins to the basal RNA polymerase II transcription machinery. Mediator is recruited to promoters by direct interactions with regulatory proteins and serves as a scaffold for the assembly of a functional preinitiation complex with RNA polymerase II and the general transcription factors. This Schizosaccharomyces pombe (strain 972 / ATCC 24843) (Fission yeast) protein is Mediator of RNA polymerase II transcription subunit 21 (med21).